A 602-amino-acid chain; its full sequence is Myotubularin (602 aa).

Positions 1–40 (MASSSASDCDAHPVERESMRKVSQDGVRQDMSKSGPRLPG) are disordered. The span at 9–31 (CDAHPVERESMRKVSQDGVRQDM) shows a compositional bias: basic and acidic residues. S18 is subject to Phosphoserine. One can recognise a GRAM domain in the interval 28–97 (RQDMSKSGPR…GVISRIEKMG (70 aa)). The region spanning 163 to 538 (GWAIYNPVEE…RHLELWVNYY (376 aa)) is the Myotubularin phosphatase domain. A 1,2-diacyl-sn-glycero-3-phospho-(1D-myo-inositol-3,5-bisphosphate) is bound by residues N288, N313, and I314. Residues N288, N313, and I314 each contribute to the a 1,2-diacyl-sn-glycero-3-phospho-(1D-myo-inositol-3-phosphate) site. Catalysis depends on C375, which acts as the Phosphocysteine intermediate. A 1,2-diacyl-sn-glycero-3-phospho-(1D-myo-inositol-3,5-bisphosphate) is bound by residues S376, D377, G378, W379, D380, R381, K417, and R421. A 1,2-diacyl-sn-glycero-3-phospho-(1D-myo-inositol-3-phosphate)-binding residues include S376, D377, G378, W379, D380, and R381. R421 contacts a 1,2-diacyl-sn-glycero-3-phospho-(1D-myo-inositol-3-phosphate). Residue T495 is modified to Phosphothreonine. The segment covering 578–592 (PTKLTDSSTPPSGSA) has biased composition (polar residues). The disordered stretch occupies residues 578–602 (PTKLTDSSTPPSGSAQIAPRMQTHF).

This sequence belongs to the protein-tyrosine phosphatase family. Non-receptor class myotubularin subfamily. In terms of assembly, heterodimer with MTMR12. Interacts with KMT2A/MLL1 (via SET domain). Interacts with DES in skeletal muscle but not in cardiac muscle. Interacts with SPEG.

The protein resides in the cytoplasm. The protein localises to the cell membrane. It is found in the cell projection. It localises to the filopodium. Its subcellular location is the ruffle. The protein resides in the late endosome. The protein localises to the myofibril. It is found in the sarcomere. It carries out the reaction a 1,2-diacyl-sn-glycero-3-phospho-(1D-myo-inositol-3-phosphate) + H2O = a 1,2-diacyl-sn-glycero-3-phospho-(1D-myo-inositol) + phosphate. The enzyme catalyses a 1,2-diacyl-sn-glycero-3-phospho-(1D-myo-inositol-3,5-bisphosphate) + H2O = a 1,2-diacyl-sn-glycero-3-phospho-(1D-myo-inositol-5-phosphate) + phosphate. It catalyses the reaction 1,2-dioctanoyl-sn-glycero-3-phospho-(1-D-myo-inositol-3-phosphate) + H2O = 1,2-dioctanoyl-sn-glycero-3-phospho-(1D-myo-inositol) + phosphate. The catalysed reaction is 1,2-dioctanoyl-sn-glycero-3-phospho-(1D-myo-inositol-3,5-bisphosphate) + H2O = 1,2-dioctanoyl-sn-glycero-3-phospho-(1D-myo-inositol-5-phosphate) + phosphate. It carries out the reaction 1,2-dihexadecanoyl-sn-glycero-3-phospho-(1D-myo-inositol-3,5-phosphate) + H2O = 1,2-dihexadecanoyl-sn-glycero-3-phospho-(1D-myo-inositol-5-phosphate) + phosphate. Allosterically activated by phosphatidylinositol 5-phosphate (PI5P). In terms of biological role, lipid phosphatase which dephosphorylates phosphatidylinositol 3-monophosphate (PI3P) and phosphatidylinositol 3,5-bisphosphate (PI(3,5)P2). Has also been shown to dephosphorylate phosphotyrosine- and phosphoserine-containing peptides. Negatively regulates EGFR degradation through regulation of EGFR trafficking from the late endosome to the lysosome. Plays a role in vacuolar formation and morphology. Regulates desmin intermediate filament assembly and architecture. Plays a role in mitochondrial morphology and positioning. Required for skeletal muscle maintenance but not for myogenesis. In skeletal muscles, stabilizes MTMR12 protein levels. This Rattus norvegicus (Rat) protein is Myotubularin.